The following is a 107-amino-acid chain: MQFSTTPTLEGQTIVEYCGVVTGEAILGANIFRDFFAGIRDIVGGRSGAYEKELRKAREIAFEELGSQARALGADAVVGIDIDYETVGQNGSMLMVSVSGTAVKTRR.

The protein belongs to the UPF0145 family.

The polypeptide is UPF0145 protein YbjQ (Escherichia coli O139:H28 (strain E24377A / ETEC)).